We begin with the raw amino-acid sequence, 1464 residues long: Sister chromatid cohesion protein PDS5 homolog B-B (1464 aa).

An HEAT repeat occupies 383-419 (LLVNDQLLNFVRERTLDKRWRVRKEAMMGLAQIYKKY). Residues 1126–1464 (KSTNVLGAVN…MKSELEGPLL (339 aa)) form a disordered region. Residues 1137–1155 (PLSSAGKQMQSKSSRMETV) are compositionally biased toward polar residues. A compositionally biased stretch (low complexity) spans 1156–1168 (SNASSGSNPSSPG). Residues 1177-1186 (TELDQIEYED) show a composition bias toward acidic residues. Composition is skewed to basic and acidic residues over residues 1197-1215 (KKSDKRDDSDLLKSEVEKP), 1234-1244 (ELSKPAQEPKS), and 1265-1274 (WQEKRLKEDL). Positions 1286–1295 (KKGRRGRPPK) are enriched in basic residues. A DNA-binding region (a.T hook 1) is located at residues 1287 to 1299 (KGRRGRPPKSAKM). The segment covering 1325-1342 (PTDEEDHLEISEEQDSEN) has biased composition (acidic residues). The span at 1347 to 1357 (RKGRGSSKKTP) shows a compositional bias: basic residues. Residues 1359-1373 (KSDSTDSALDTSRPT) show a composition bias toward polar residues. 2 consecutive DNA-binding regions (a.T hook) follow at residues 1375 to 1387 (QKRRGRPPKTPTV) and 1391 to 1403 (KSHVGRPRKVVSK). Residues 1390–1400 (KKSHVGRPRKV) are compositionally biased toward basic residues. The span at 1425–1435 (SNEEETADEEV) shows a compositional bias: acidic residues. A compositionally biased stretch (basic residues) spans 1441 to 1453 (GRRRTAKKRRWIQ). A compositionally biased stretch (basic and acidic residues) spans 1455-1464 (MKSELEGPLL).

It belongs to the PDS5 family. In terms of assembly, interacts with the cohesin complex. Post-translationally, phosphorylated in mitotic cells.

Its subcellular location is the nucleus. Functionally, plays a role in androgen-induced proliferative arrest. Required for maintenance of sister chromatid cohesion during mitosis. This is Sister chromatid cohesion protein PDS5 homolog B-B (pds5b-b) from Xenopus laevis (African clawed frog).